Reading from the N-terminus, the 298-residue chain is ER-bound oxygenase mpaB (298 aa).

At 1–24 (MDKGTSFFTTPSFSATTRAIFNTM) the chain is on the lumenal side. A helical transmembrane segment spans residues 25 to 45 (PQWFSFAVGLLIAYPLLINSL). The Cytoplasmic segment spans residues 46–298 (RYRRLKQLQK…RLRKAMLYVE (253 aa)).

This sequence belongs to the mpaB oxygenase family.

It is found in the endoplasmic reticulum membrane. It catalyses the reaction 4-farnesyl-3,5-dihydroxy-6-methylphthalide + AH2 + 2 O2 = (4E,8E)-10-(4,6-dihydroxy-7-methyl-3-oxo-1,3-dihydro-2-benzofuran-5-yl)-4,8-dimethyldeca-4,8-dienoate + acetone + A + H2O + H(+). The protein operates within secondary metabolite biosynthesis; terpenoid biosynthesis. Its function is as follows. ER-bound oxygenase; part of the gene cluster that mediates the biosynthesis of mycophenolic acid (MPA), the first isolated antibiotic natural product in the world obtained from a culture of Penicillium brevicompactum in 1893. MpaB catalyzes the oxidative cleavage the C19-C20 double bond in farnesyl-DHMP (FDHMP) to yield FDHMP-3C via a mycophenolic aldehyde intermediate. The first step of the pathway is the synthesis of 5-methylorsellinic acid (5MOA) by the cytosolic polyketide synthase mpaC. 5MOA is then converted to the phthalide compound 5,7-dihydroxy-4,6-dimethylphthalide (DHMP) by the endoplasmic reticulum-bound cytochrome P450 monooxygenase mpaDE. MpaDE first catalyzes hydroxylation of 5-MOA to 4,6-dihydroxy-2-(hydroxymethyl)-3-methylbenzoic acid (DHMB). MpaDE then acts as a lactone synthase that catalyzes the ring closure to convert DHMB into DHMP. The next step is the prenylation of DHMP by the Golgi apparatus-associated prenyltransferase mpaA to yield farnesyl-DHMP (FDHMP). The ER-bound oxygenase mpaB then mediates the oxidative cleavage the C19-C20 double bond in FDHMP to yield FDHMP-3C via a mycophenolic aldehyde intermediate. The O-methyltransferase mpaG catalyzes the methylation of FDHMP-3C to yield MFDHMP-3C. After the cytosolic methylation of FDHMP-3C, MFDHMP-3C enters into peroxisomes probably via free diffusion due to its low molecular weight. Upon a peroxisomal CoA ligation reaction, catalyzed by a beta-oxidation component enzyme acyl-CoA ligase ACL891, MFDHMP-3C-CoA would then be restricted to peroxisomes for the following beta-oxidation pathway steps. The peroxisomal beta-oxidation machinery than converts MFDHMP-3C-CoA into MPA_CoA, via a beta-oxidation chain-shortening process. Finally mpaH acts as a peroxisomal acyl-CoA hydrolase with high substrate specificity toward MPA-CoA to release the final product MPA. In Penicillium roqueforti (strain FM164), this protein is ER-bound oxygenase mpaB.